The primary structure comprises 232 residues: UPF0235 protein At5g63440 (232 aa).

Belongs to the UPF0235 family. Interacts with CTN.

It localises to the nucleus speckle. Functionally, may play a role during early embryonic development. Probably involved in pre-mRNA splicing. This Arabidopsis thaliana (Mouse-ear cress) protein is UPF0235 protein At5g63440.